The following is a 92-amino-acid chain: UPF0213 protein H16_B0156 (92 aa).

The GIY-YIG domain maps to 5-80 (SAWYLYLLEC…KRLSSTQKRA (76 aa)).

It belongs to the UPF0213 family.

In Cupriavidus necator (strain ATCC 17699 / DSM 428 / KCTC 22496 / NCIMB 10442 / H16 / Stanier 337) (Ralstonia eutropha), this protein is UPF0213 protein H16_B0156.